Here is a 519-residue protein sequence, read N- to C-terminus: Na(+)/H(+) exchange regulatory cofactor NHE-RF3 (519 aa).

The PDZ 1 domain maps to E9–D90. S108, S148, S192, S250, S334, and S348 each carry phosphoserine. 2 PDZ domains span residues R134–E215 and I243–E323. The interval G347–H374 is disordered. Residues P357–D367 show a composition bias toward polar residues. One can recognise a PDZ 4 domain in the interval L378–K458. T451 carries the post-translational modification Phosphothreonine. Positions D479–M519 are disordered. Basic and acidic residues predominate over residues P482–H504. A phosphoserine mark is found at S492, S508, S510, S511, S512, and S514. Residues S505 to M519 are compositionally biased toward low complexity.

The protein belongs to the NHER family. Interacts with PDZK1IP1 and ABCC2. Interacts (via PDZ domains 1 and 3) with SCARB1 (C-terminal domain). Forms a heterodimeric complex with NHERF1. Interacts with AKAP2, BCR, CFTR, SLC22A12, SLC22A4, SLC22A5, NHERF2 and SLC17A1. Component of a complex, composed of PDZK1, SYNGAP1, KLHL17 and NMDA receptors. Interacts (via PDZ1 domain) directly with KLHL17; the interaction is important for integrity of actin cytoskeleton structures in neurons. Interacts (via the first PDZ domain) with PTGIR (via non-isoprenylated C-terminus). Interacts (via C-terminal PDZ domain) with SLC26A6 (via C-terminal domain). Interacts (via C-terminal PDZ domain) with SLC9A3 (via C-terminal domain). Interacts (via PDZ domains 1 and 3) with SLC5A8 (via PDZ-binding motif); interaction increases nicotinate transport activity of SLC5A8. Expression is limited to epithelial cells. Expressed in the kidney (brush border of proximal tubule), pancreas, liver, and small intestine. Expressed at a lower level in the adrenal cortex, testis and stomach. Overexpressed in breast, renal and lung carcinomas.

The protein resides in the membrane. It is found in the cell membrane. Its function is as follows. A scaffold protein that connects plasma membrane proteins and regulatory components, regulating their surface expression in epithelial cells apical domains. May be involved in the coordination of a diverse range of regulatory processes for ion transport and second messenger cascades. In complex with NHERF1, may cluster proteins that are functionally dependent in a mutual fashion and modulate the trafficking and the activity of the associated membrane proteins. May play a role in the cellular mechanisms associated with multidrug resistance through its interaction with ABCC2 and PDZK1IP1. May potentiate the CFTR chloride channel activity. Required for normal cell-surface expression of SCARB1. Plays a role in maintaining normal plasma cholesterol levels via its effects on SCARB1. Plays a role in the normal localization and function of the chloride-anion exchanger SLC26A6 to the plasma membrane in the brush border of the proximal tubule of the kidney. May be involved in the regulation of proximal tubular Na(+)-dependent inorganic phosphate cotransport therefore playing an important role in tubule function. The sequence is that of Na(+)/H(+) exchange regulatory cofactor NHE-RF3 (PDZK1) from Homo sapiens (Human).